Reading from the N-terminus, the 268-residue chain is Thiazole synthase (268 aa).

K96 serves as the catalytic Schiff-base intermediate with DXP. Residues G157, 185–186 (AG), and 207–208 (NT) contribute to the 1-deoxy-D-xylulose 5-phosphate site. Residues 238–268 (PMRPREAASPSSPVEGVPFTPTGPRPGRGPQ) form a disordered region. A compositionally biased stretch (pro residues) spans 258-268 (PTGPRPGRGPQ).

The protein belongs to the ThiG family. In terms of assembly, homotetramer. Forms heterodimers with either ThiH or ThiS.

It localises to the cytoplasm. The catalysed reaction is [ThiS sulfur-carrier protein]-C-terminal-Gly-aminoethanethioate + 2-iminoacetate + 1-deoxy-D-xylulose 5-phosphate = [ThiS sulfur-carrier protein]-C-terminal Gly-Gly + 2-[(2R,5Z)-2-carboxy-4-methylthiazol-5(2H)-ylidene]ethyl phosphate + 2 H2O + H(+). It functions in the pathway cofactor biosynthesis; thiamine diphosphate biosynthesis. Catalyzes the rearrangement of 1-deoxy-D-xylulose 5-phosphate (DXP) to produce the thiazole phosphate moiety of thiamine. Sulfur is provided by the thiocarboxylate moiety of the carrier protein ThiS. In vitro, sulfur can be provided by H(2)S. The protein is Thiazole synthase of Thermus thermophilus (strain ATCC BAA-163 / DSM 7039 / HB27).